Consider the following 330-residue polypeptide: Ketol-acid reductoisomerase (NADP(+)) (330 aa).

A KARI N-terminal Rossmann domain is found at 1–181; the sequence is MNVYYEQDAD…GGAKAGVIET (181 aa). NADP(+) is bound by residues 24–27, R47, S50, S52, and 82–85; these read YGSQ and DQYQ. Residue H107 is part of the active site. G133 is a binding site for NADP(+). The KARI C-terminal knotted domain maps to 182–327; the sequence is TIKNETETDL…AKLRNMMSWL (146 aa). Residues D190, E194, E226, and E230 each coordinate Mg(2+). S251 contributes to the substrate binding site.

It belongs to the ketol-acid reductoisomerase family. Mg(2+) is required as a cofactor.

The catalysed reaction is (2R)-2,3-dihydroxy-3-methylbutanoate + NADP(+) = (2S)-2-acetolactate + NADPH + H(+). It catalyses the reaction (2R,3R)-2,3-dihydroxy-3-methylpentanoate + NADP(+) = (S)-2-ethyl-2-hydroxy-3-oxobutanoate + NADPH + H(+). Its pathway is amino-acid biosynthesis; L-isoleucine biosynthesis; L-isoleucine from 2-oxobutanoate: step 2/4. It functions in the pathway amino-acid biosynthesis; L-valine biosynthesis; L-valine from pyruvate: step 2/4. Involved in the biosynthesis of branched-chain amino acids (BCAA). Catalyzes an alkyl-migration followed by a ketol-acid reduction of (S)-2-acetolactate (S2AL) to yield (R)-2,3-dihydroxy-isovalerate. In the isomerase reaction, S2AL is rearranged via a Mg-dependent methyl migration to produce 3-hydroxy-3-methyl-2-ketobutyrate (HMKB). In the reductase reaction, this 2-ketoacid undergoes a metal-dependent reduction by NADPH to yield (R)-2,3-dihydroxy-isovalerate. The polypeptide is Ketol-acid reductoisomerase (NADP(+)) (Chlorobium phaeovibrioides (strain DSM 265 / 1930) (Prosthecochloris vibrioformis (strain DSM 265))).